A 317-amino-acid polypeptide reads, in one-letter code: Glutaminase (317 aa).

Substrate contacts are provided by Ser-67, Asn-118, Glu-162, Asn-169, Tyr-193, Tyr-245, and Val-263.

Belongs to the glutaminase family. As to quaternary structure, homotetramer.

The enzyme catalyses L-glutamine + H2O = L-glutamate + NH4(+). This Brucella canis (strain ATCC 23365 / NCTC 10854 / RM-666) protein is Glutaminase.